Reading from the N-terminus, the 473-residue chain is Aspartyl/glutamyl-tRNA(Asn/Gln) amidotransferase subunit B (473 aa).

It belongs to the GatB/GatE family. GatB subfamily. As to quaternary structure, heterotrimer of A, B and C subunits.

The enzyme catalyses L-glutamyl-tRNA(Gln) + L-glutamine + ATP + H2O = L-glutaminyl-tRNA(Gln) + L-glutamate + ADP + phosphate + H(+). It catalyses the reaction L-aspartyl-tRNA(Asn) + L-glutamine + ATP + H2O = L-asparaginyl-tRNA(Asn) + L-glutamate + ADP + phosphate + 2 H(+). In terms of biological role, allows the formation of correctly charged Asn-tRNA(Asn) or Gln-tRNA(Gln) through the transamidation of misacylated Asp-tRNA(Asn) or Glu-tRNA(Gln) in organisms which lack either or both of asparaginyl-tRNA or glutaminyl-tRNA synthetases. The reaction takes place in the presence of glutamine and ATP through an activated phospho-Asp-tRNA(Asn) or phospho-Glu-tRNA(Gln). The chain is Aspartyl/glutamyl-tRNA(Asn/Gln) amidotransferase subunit B from Wolbachia sp. subsp. Drosophila simulans (strain wRi).